Reading from the N-terminus, the 444-residue chain is Ribosomal protein uS12 methylthiotransferase RimO (444 aa).

Residues 1-117 (MKVGIISLGC…ITEVISSALK (117 aa)) form the MTTase N-terminal domain. [4Fe-4S] cluster-binding residues include C10, C46, C80, C154, C158, and C161. The Radical SAM core domain maps to 140 to 370 (YQPGPSAYIK…WEVQKEITRK (231 aa)). In terms of domain architecture, TRAM spans 373-441 (EGLVGTEMRV…DYDLIGEMTN (69 aa)).

This sequence belongs to the methylthiotransferase family. RimO subfamily. [4Fe-4S] cluster serves as cofactor.

Its subcellular location is the cytoplasm. The catalysed reaction is L-aspartate(89)-[ribosomal protein uS12]-hydrogen + (sulfur carrier)-SH + AH2 + 2 S-adenosyl-L-methionine = 3-methylsulfanyl-L-aspartate(89)-[ribosomal protein uS12]-hydrogen + (sulfur carrier)-H + 5'-deoxyadenosine + L-methionine + A + S-adenosyl-L-homocysteine + 2 H(+). Catalyzes the methylthiolation of an aspartic acid residue of ribosomal protein uS12. The chain is Ribosomal protein uS12 methylthiotransferase RimO from Natranaerobius thermophilus (strain ATCC BAA-1301 / DSM 18059 / JW/NM-WN-LF).